The chain runs to 520 residues: General transcription factor 3C polypeptide 5 (520 aa).

Position 2 is an N-acetylalanine (A2). Residues 466 to 520 (LFSNTGKADRGKEQLMFESGEEEEEEEEEEEEEEEDFKPSDGSENEMETEILDYV) form a disordered region. Acidic residues-rich tracts occupy residues 484–501 (SGEEEEEEEEEEEEEEED) and 508–520 (SENEMETEILDYV).

Belongs to the TFIIIC subunit 5 family. As to quaternary structure, part of the TFIIIC subcomplex TFIIIC2, consisting of six subunits, GTF3C1, GTF3C2, GTF3C3, GTF3C4, GTF3C5 and GTF3C6. Interacts with BRF1, GTF3C6 and TBP.

It is found in the nucleus. Its function is as follows. Involved in RNA polymerase III-mediated transcription. Integral, tightly associated component of the DNA-binding TFIIIC2 subcomplex that directly binds tRNA and virus-associated RNA promoters. In Mus musculus (Mouse), this protein is General transcription factor 3C polypeptide 5 (Gtf3c5).